Consider the following 230-residue polypeptide: 2,3-bisphosphoglycerate-dependent phosphoglycerate mutase (230 aa).

Residues 8 to 15 (RHGQSIWN), 21 to 22 (TG), R60, 87 to 90 (ERHY), K98, and 114 to 115 (RR) each bind substrate. H9 (tele-phosphohistidine intermediate) is an active-site residue. Catalysis depends on E87, which acts as the Proton donor/acceptor. A disordered region spans residues 117 to 143 (YDTPPPALDAEDERHPRHDPRYAGLDP). Positions 128–137 (DERHPRHDPR) are enriched in basic and acidic residues. 183–184 (GN) is a binding site for substrate.

The protein belongs to the phosphoglycerate mutase family. BPG-dependent PGAM subfamily. As to quaternary structure, homodimer.

It carries out the reaction (2R)-2-phosphoglycerate = (2R)-3-phosphoglycerate. The protein operates within carbohydrate degradation; glycolysis; pyruvate from D-glyceraldehyde 3-phosphate: step 3/5. Its function is as follows. Catalyzes the interconversion of 2-phosphoglycerate and 3-phosphoglycerate. In Halorhodospira halophila (strain DSM 244 / SL1) (Ectothiorhodospira halophila (strain DSM 244 / SL1)), this protein is 2,3-bisphosphoglycerate-dependent phosphoglycerate mutase.